Here is a 353-residue protein sequence, read N- to C-terminus: Guanine nucleotide-binding protein alpha-1 subunit (353 aa).

Positions 1–26 (MGCGMSTEEKEGKARNEEIENQLKRD) are disordered. A lipid anchor (N-myristoyl glycine) is attached at Gly-2. A lipid anchor (S-palmitoyl cysteine) is attached at Cys-3. The span at 7 to 26 (TEEKEGKARNEEIENQLKRD) shows a compositional bias: basic and acidic residues. In terms of domain architecture, G-alpha spans 32 to 353 (NEIKMLLLGA…QENLRLCGLI (322 aa)). Residues 35–48 (KMLLLGAGESGKST) are G1 motif. GTP contacts are provided by Glu-43, Ser-44, Gly-45, Lys-46, Ser-47, Thr-48, Asp-150, Leu-175, Thr-181, Gly-203, Asn-269, Lys-270, Asp-272, and Ala-325. Residue Ser-47 coordinates Mg(2+). The tract at residues 173–181 (DVLRSRVKT) is G2 motif. Thr-181 is a binding site for Mg(2+). Positions 196 to 205 (YRMFDVGGQR) are G3 motif. The G4 motif stretch occupies residues 265-272 (ILFLNKID). The tract at residues 323-328 (TCATDT) is G5 motif.

It belongs to the G-alpha family. G(q) subfamily. G proteins are composed of 3 units; alpha, beta and gamma. The alpha chain contains the guanine nucleotide binding site. The cofactor is Mg(2+).

Guanine nucleotide-binding proteins (G proteins) are involved as modulators or transducers in various transmembrane signaling systems. The chain is Guanine nucleotide-binding protein alpha-1 subunit (gna-1) from Neurospora crassa (strain ATCC 24698 / 74-OR23-1A / CBS 708.71 / DSM 1257 / FGSC 987).